A 438-amino-acid polypeptide reads, in one-letter code: GTPase Der (438 aa).

2 consecutive EngA-type G domains span residues 4-168 (PIVA…PKGY) and 177-352 (IRIA…TNYS). Residues 10 to 17 (GRPNVGKS), 57 to 61 (DTGGI), 120 to 123 (NKID), 183 to 190 (GKPNVGKS), 230 to 234 (DTAGL), and 295 to 298 (NKWD) each bind GTP. One can recognise a KH-like domain in the interval 353–437 (KRISTGVLND…GIKMEFRERK (85 aa)).

Belongs to the TRAFAC class TrmE-Era-EngA-EngB-Septin-like GTPase superfamily. EngA (Der) GTPase family. As to quaternary structure, associates with the 50S ribosomal subunit.

In terms of biological role, GTPase that plays an essential role in the late steps of ribosome biogenesis. This Clostridium tetani (strain Massachusetts / E88) protein is GTPase Der.